A 125-amino-acid chain; its full sequence is MKLLTHNLLSSHVRGVGTRGFPLRLQATEVRINPVEFNPEFVARMIPKVEWAALVQAADTLNLAEVPKEPTEGYEHDETFLRKMHHVLLEVDVLEGTLQCPESGRLFPISRGIPNMLLNDEETET.

The 118-residue stretch at 2 to 119 (KLLTHNLLSS…SRGIPNMLLN (118 aa)) folds into the TRM112 domain.

This sequence belongs to the TRM112 family. In terms of assembly, part of the heterodimeric BUD23-TRM112 methyltransferase complex; this heterodimerization is necessary for the metabolic stability and activity of the catalytic subunit BUD23. Part of the heterodimeric N6AMT1-TRM112 methyltransferase complex; this heterodimerization is necessary for S-adenosyl-L-methionine-binding to N6AMT1/HEMK2. Part of the heterodimeric ALKBH8-TRM112 methyltransferase complex. Part of the heterodimeric METTL5-TRM112 methyltransferase complex; this heterodimerization is necessary for the stability of the catalytic subunit METTL5. Part of the heterodimeric THUMPD3-TRM112 methyltransferase complex; this complex forms an active tRNA methyltransferase, where TRMT112 acts as an activator of the catalytic subunit THUMPD3. Part of the heterodimeric THUMPD2-TRM112 methyltransferase complex; this complex forms an active tRNA methyltransferase, where TRMT112 acts as an activator of the catalytic subunit THUMPD2. Part of the heterodimeric TRMT11-TRM112 methyltransferase complex; this complex forms an active tRNA methyltransferase, where TRMT112 acts as an activator of the catalytic subunit TRMT11. In terms of tissue distribution, abundantly expressed in the testis, also expressed in the brain, heart, kidney, liver, lung, muscle and spleen.

It localises to the nucleus. Its subcellular location is the nucleoplasm. It is found in the cytoplasm. The protein localises to the perinuclear region. Its function is as follows. Acts as an activator of both rRNA/tRNA and protein methyltransferases. Together with methyltransferase BUD23, methylates the N(7) position of a guanine in 18S rRNA. The heterodimer with HEMK2/N6AMT1 catalyzes N5-methylation of ETF1 on 'Gln-185', using S-adenosyl L-methionine as methyl donor. The heterodimer with ALKBH8 catalyzes the methylation of 5-carboxymethyl uridine to 5-methylcarboxymethyl uridine at the wobble position of the anticodon loop in target tRNA species. Together with methyltransferase THUMPD3, catalyzes the formation of N(2)-methylguanosine at position 6 in a broad range of tRNA substrates and at position 7 of tRNA(Trp). Involved in the pre-rRNA processing steps leading to small-subunit rRNA production. Together with methyltransferase METTL5, specifically methylates the 6th position of adenine in position 1832 of 18S rRNA. The polypeptide is Multifunctional methyltransferase subunit TRM112-like protein (Trmt112) (Mus musculus (Mouse)).